We begin with the raw amino-acid sequence, 381 residues long: Anti-sigma-I factor RsgI (381 aa).

The Cytoplasmic portion of the chain corresponds to 1–63 (MRRGIIVEKN…FDFFKLRPFK (63 aa)). A RsgI N-terminal anti-sigma domain is found at 2 to 50 (RRGIIVEKNKKFVTLLTPDGQFLKAKNDRHSYEIGEEIMLPSETRMGRR). A helical transmembrane segment spans residues 64–84 (MGIFTMTAIMLFIFIVLPVFS). Topologically, residues 85–381 (NNKAYAYMTI…NEDSPSAPGE (297 aa)) are extracellular. The segment at 198 to 381 (SDMQTREKAK…NEDSPSAPGE (184 aa)) is disordered. 4 stretches are compositionally biased toward basic and acidic residues: residues 200–210 (MQTREKAKKEG), 219–244 (SNEK…QKSD), 273–321 (GDQK…DKGN), and 349–359 (SRRDNASDRRN).

As to quaternary structure, interacts (via RsgI N-terminal anti-sigma domain) with SigI.

Its subcellular location is the cell membrane. Its function is as follows. Anti-sigma factor for SigI. Negatively regulates SigI activity through direct interaction. The polypeptide is Anti-sigma-I factor RsgI (Bacillus subtilis (strain 168)).